Consider the following 152-residue polypeptide: Lipoprotein signal peptidase (152 aa).

3 helical membrane-spanning segments follow: residues 5–25, 61–81, and 84–104; these read LFVL…FWIV, WFFV…LATH, and LNIW…GNFI. Catalysis depends on residues aspartate 114 and aspartate 130. A helical transmembrane segment spans residues 125-145; sequence IFNVADSYLTVGVILLVICLW.

It belongs to the peptidase A8 family.

It localises to the cell membrane. It carries out the reaction Release of signal peptides from bacterial membrane prolipoproteins. Hydrolyzes -Xaa-Yaa-Zaa-|-(S,diacylglyceryl)Cys-, in which Xaa is hydrophobic (preferably Leu), and Yaa (Ala or Ser) and Zaa (Gly or Ala) have small, neutral side chains.. It participates in protein modification; lipoprotein biosynthesis (signal peptide cleavage). In terms of biological role, this protein specifically catalyzes the removal of signal peptides from prolipoproteins. This chain is Lipoprotein signal peptidase, found in Streptococcus pyogenes serotype M18 (strain MGAS8232).